A 139-amino-acid polypeptide reads, in one-letter code: Ribulose bisphosphate carboxylase small subunit (139 aa).

This sequence belongs to the RuBisCO small chain family. In terms of assembly, heterohexadecamer of 8 large and 8 small subunits.

It localises to the plastid. The protein resides in the chloroplast. Its function is as follows. RuBisCO catalyzes two reactions: the carboxylation of D-ribulose 1,5-bisphosphate, the primary event in carbon dioxide fixation, as well as the oxidative fragmentation of the pentose substrate in the photorespiration process. Both reactions occur simultaneously and in competition at the same active site. Although the small subunit is not catalytic it is essential for maximal activity. The sequence is that of Ribulose bisphosphate carboxylase small subunit from Thalassiosira nordenskioeldii (Marine diatom).